Consider the following 507-residue polypeptide: Solute carrier family 2, facilitated glucose transporter member 6 (507 aa).

The tract at residues 1–28 (MQEPLLGAEGPDYDTFPEKPPPSPGDRA) is disordered. Over 1–37 (MQEPLLGAEGPDYDTFPEKPPPSPGDRARVGTLQNKR) the chain is Cytoplasmic. Residues 5-6 (LL) carry the Dileucine internalization motif motif. A Phosphoserine modification is found at Ser-23. A helical membrane pass occupies residues 38–58 (VFLATFAAVLGNFSFGYALVY). The Extracellular portion of the chain corresponds to 59–81 (TSPVIPALERSLDPDLHLTKSQA). A helical membrane pass occupies residues 82-102 (SWFGSVFTLGAAAGGLSAMIL). The Cytoplasmic portion of the chain corresponds to 103–111 (NDLLGRKLS). Residues 112-132 (IMFSAVPSAAGYALMAGAHGL) traverse the membrane as a helical segment. Topologically, residues 133–140 (WMLLLGRT) are extracellular. Residues 141–161 (LTGFAGGLTAACIPVYVSEIA) traverse the membrane as a helical segment. The Cytoplasmic segment spans residues 162–168 (PPGVRGA). A helical transmembrane segment spans residues 169–189 (LGATPQLMAVFGSLSLYALGL). Gln-174 is a binding site for a D-hexose. Residues 190-194 (LLPWR) are Extracellular-facing. A helical membrane pass occupies residues 195 to 215 (WLAVAGEAPVLIMILLLSFMP). Topologically, residues 216–289 (NSPRFLLSRG…LLMRLLQQLT (74 aa)) are cytoplasmic. A D-hexose is bound at residue 286–287 (QQ). A helical transmembrane segment spans residues 290 to 310 (GITPILVYLQSIFDSTAVLLP). Residues 311 to 314 (PKDD) lie on the Extracellular side of the membrane. The chain crosses the membrane as a helical span at residues 315 to 335 (AAIVGAVRLLSVLIAALTMDL). Residues 336–339 (AGRK) are Cytoplasmic-facing. Residues 340–360 (VLLFVSAAIMFAANLTLGLYI) form a helical membrane-spanning segment. Residues 361 to 395 (HFGPRPLSPNSTAGLESESWGDLAQPLAAPAGYLT) are Extracellular-facing. N-linked (GlcNAc...) asparagine glycosylation is present at Asn-370. A helical membrane pass occupies residues 396–416 (LVPLLATMLFIMGYAVGWGPI). Topologically, residues 417-435 (TWLLMSEVLPLRARGVASG) are cytoplasmic. Residue Trp-418 participates in a D-hexose binding. A helical transmembrane segment spans residues 436–456 (LCVLASWLTAFVLTKSFLPVV). At 457 to 462 (STFGLQ) the chain is on the extracellular side. A helical membrane pass occupies residues 463–483 (VPFFFFAAICLVSLVFTGCCV). Residues 484–507 (PETKGRSLEQIESFFRTGRRSFLR) are Cytoplasmic-facing.

It belongs to the major facilitator superfamily. Sugar transporter (TC 2.A.1.1) family. Glucose transporter subfamily. As to expression, highly expressed in brain, spleen and peripheral blood leukocytes.

The protein resides in the lysosome membrane. In terms of biological role, probable sugar transporter that acts as a regulator of glycolysis in macrophages. Does not transport glucose. This is Solute carrier family 2, facilitated glucose transporter member 6 from Homo sapiens (Human).